The following is a 275-amino-acid chain: Aliphatic sulfonates import ATP-binding protein SsuB 1 (275 aa).

An ABC transporter domain is found at 34–260 (ISLTGLEKSF…RHGHPGLCEL (227 aa)). 66-73 (GKSGCGKS) lines the ATP pocket.

Belongs to the ABC transporter superfamily. Aliphatic sulfonates importer (TC 3.A.1.17.2) family. As to quaternary structure, the complex is composed of two ATP-binding proteins (SsuB), two transmembrane proteins (SsuC) and a solute-binding protein (SsuA).

It localises to the cell inner membrane. The catalysed reaction is ATP + H2O + aliphatic sulfonate-[sulfonate-binding protein]Side 1 = ADP + phosphate + aliphatic sulfonateSide 2 + [sulfonate-binding protein]Side 1.. Part of the ABC transporter complex SsuABC involved in aliphatic sulfonates import. Responsible for energy coupling to the transport system. The polypeptide is Aliphatic sulfonates import ATP-binding protein SsuB 1 (Rhizobium johnstonii (strain DSM 114642 / LMG 32736 / 3841) (Rhizobium leguminosarum bv. viciae)).